We begin with the raw amino-acid sequence, 479 residues long: UDP-glycosyltransferase 85A5 (479 aa).

UDP-alpha-D-glucose contacts are provided by residues Ser-301, 358 to 360, 375 to 383, and 397 to 400; these read CPQ, HSGWNSTLE, and FAEQ.

Belongs to the UDP-glycosyltransferase family. Expressed in roots, shoots and leaves.

This Arabidopsis thaliana (Mouse-ear cress) protein is UDP-glycosyltransferase 85A5 (UGT85A5).